Reading from the N-terminus, the 137-residue chain is S-protein homolog 16 (137 aa).

Residues 1-21 form the signal peptide; that stretch reads MKNLLVFIFVFSLCMFDHVSG. The N-linked (GlcNAc...) asparagine glycan is linked to Asn-87.

It belongs to the plant self-incompatibility (S1) protein family.

Its subcellular location is the secreted. The chain is S-protein homolog 16 from Arabidopsis thaliana (Mouse-ear cress).